The sequence spans 30 residues: Photosystem II reaction center protein Psb30 (30 aa).

Topologically, residues 1-6 (EVIAQL) are lumenal. The helical transmembrane segment at 7–21 (TMIAMIGIAGPMIIF) threads the bilayer. The Cytoplasmic portion of the chain corresponds to 22-30 (LLAVRRGNL).

It belongs to the Psb30/Ycf12 family. In terms of assembly, PSII is composed of 1 copy each of membrane proteins PsbA, PsbB, PsbC, PsbD, PsbE, PsbF, PsbH, PsbI, PsbJ, PsbK, PsbL, PsbM, PsbT, PsbX, PsbY, PsbZ, Psb30/Ycf12, peripheral proteins PsbO, CyanoQ (PsbQ), PsbU, PsbV and a large number of cofactors. It forms dimeric complexes. PSII binds multiple chlorophylls, carotenoids and specific lipids. is required as a cofactor.

Its subcellular location is the cellular thylakoid membrane. Its function is as follows. A core subunit of photosystem II (PSII), probably helps stabilize the reaction center. PSII is a light-driven water plastoquinone oxidoreductase, using light energy to abstract electrons from H(2)O, generating a proton gradient subsequently used for ATP formation. This Thermostichus vulcanus (Synechococcus vulcanus) protein is Photosystem II reaction center protein Psb30.